A 572-amino-acid polypeptide reads, in one-letter code: Methionine--tRNA ligase (572 aa).

Residues 11–21 (PYINGIKHLGN) carry the 'HIGH' region motif. Residues Cys143, Cys146, Cys156, and Cys159 each coordinate Zn(2+). Positions 346–350 (QFSTS) match the 'KMSKS' region motif. Thr349 is an ATP binding site.

It belongs to the class-I aminoacyl-tRNA synthetase family. MetG type 1 subfamily. As to quaternary structure, monomer. It depends on Zn(2+) as a cofactor.

It localises to the cytoplasm. The catalysed reaction is tRNA(Met) + L-methionine + ATP = L-methionyl-tRNA(Met) + AMP + diphosphate. Its function is as follows. Is required not only for elongation of protein synthesis but also for the initiation of all mRNA translation through initiator tRNA(fMet) aminoacylation. This is Methionine--tRNA ligase from Cereibacter sphaeroides (strain ATCC 17025 / ATH 2.4.3) (Rhodobacter sphaeroides).